A 360-amino-acid chain; its full sequence is Phospho-N-acetylmuramoyl-pentapeptide-transferase (360 aa).

The next 10 helical transmembrane spans lie at 21–41 (YITV…LWIG), 73–93 (TMGG…WANL), 94–114 (ANPY…IGFV), 132–152 (WKYF…YWLG), 168–188 (IMPQ…VGTG), 199–219 (GLAI…AWAT), 239–259 (VVVF…FNTY), 263–283 (VFMG…VAIL), 288–308 (FLLV…ILQV), and 338–358 (VIIR…VTLK).

Belongs to the glycosyltransferase 4 family. MraY subfamily. Mg(2+) is required as a cofactor.

The protein localises to the cell inner membrane. It catalyses the reaction UDP-N-acetyl-alpha-D-muramoyl-L-alanyl-gamma-D-glutamyl-meso-2,6-diaminopimeloyl-D-alanyl-D-alanine + di-trans,octa-cis-undecaprenyl phosphate = di-trans,octa-cis-undecaprenyl diphospho-N-acetyl-alpha-D-muramoyl-L-alanyl-D-glutamyl-meso-2,6-diaminopimeloyl-D-alanyl-D-alanine + UMP. The protein operates within cell wall biogenesis; peptidoglycan biosynthesis. Its function is as follows. Catalyzes the initial step of the lipid cycle reactions in the biosynthesis of the cell wall peptidoglycan: transfers peptidoglycan precursor phospho-MurNAc-pentapeptide from UDP-MurNAc-pentapeptide onto the lipid carrier undecaprenyl phosphate, yielding undecaprenyl-pyrophosphoryl-MurNAc-pentapeptide, known as lipid I. This chain is Phospho-N-acetylmuramoyl-pentapeptide-transferase, found in Haemophilus influenzae (strain PittEE).